Reading from the N-terminus, the 179-residue chain is Adenine phosphoribosyltransferase (179 aa).

It belongs to the purine/pyrimidine phosphoribosyltransferase family. Homodimer.

It localises to the cytoplasm. It carries out the reaction AMP + diphosphate = 5-phospho-alpha-D-ribose 1-diphosphate + adenine. It functions in the pathway purine metabolism; AMP biosynthesis via salvage pathway; AMP from adenine: step 1/1. Catalyzes a salvage reaction resulting in the formation of AMP, that is energically less costly than de novo synthesis. This Bradyrhizobium diazoefficiens (strain JCM 10833 / BCRC 13528 / IAM 13628 / NBRC 14792 / USDA 110) protein is Adenine phosphoribosyltransferase.